A 573-amino-acid chain; its full sequence is Phosphomethylpyrimidine synthase (573 aa).

Substrate is bound by residues asparagine 190, methionine 219, tyrosine 248, histidine 284, 304 to 306 (SRG), 345 to 348 (DGLR), and glutamate 384. Histidine 388 provides a ligand contact to Zn(2+). Tyrosine 411 lines the substrate pocket. Position 452 (histidine 452) interacts with Zn(2+). Residues cysteine 532, cysteine 535, and cysteine 540 each coordinate [4Fe-4S] cluster.

Belongs to the ThiC family. [4Fe-4S] cluster serves as cofactor.

The enzyme catalyses 5-amino-1-(5-phospho-beta-D-ribosyl)imidazole + S-adenosyl-L-methionine = 4-amino-2-methyl-5-(phosphooxymethyl)pyrimidine + CO + 5'-deoxyadenosine + formate + L-methionine + 3 H(+). It participates in cofactor biosynthesis; thiamine diphosphate biosynthesis. Its function is as follows. Catalyzes the synthesis of the hydroxymethylpyrimidine phosphate (HMP-P) moiety of thiamine from aminoimidazole ribotide (AIR) in a radical S-adenosyl-L-methionine (SAM)-dependent reaction. The polypeptide is Phosphomethylpyrimidine synthase (Geobacillus sp. (strain WCH70)).